The primary structure comprises 251 residues: Flap endonuclease Xni (251 aa).

A Mg(2+)-binding site is contributed by D104. A 5'-3' exonuclease domain is found at 160 to 250 (VLPRQLPDYW…SGNLQQLRLK (91 aa)). K(+)-binding residues include L171, A172, P180, V182, and V185. An interaction with DNA region spans residues 184 to 189 (GVGAKT).

Belongs to the Xni family. The cofactor is Mg(2+). K(+) serves as cofactor.

Functionally, has flap endonuclease activity. During DNA replication, flap endonucleases cleave the 5'-overhanging flap structure that is generated by displacement synthesis when DNA polymerase encounters the 5'-end of a downstream Okazaki fragment. This is Flap endonuclease Xni from Yersinia pestis bv. Antiqua (strain Nepal516).